We begin with the raw amino-acid sequence, 132 residues long: SH2 domain-containing protein 1B2 (132 aa).

One can recognise an SH2 domain in the interval 5-101 (YYHGCLTKRE…GMVVHLSNPI (97 aa)).

In terms of assembly, interacts with SLAMF1 (phosphorylated). Interacts with CD244. Interacts with Src kinases HCK, LYN, FYN, FGR and LCK (via kinase domains). As to expression, expressed in spleen. Expressed in macrophages, CD8(+) T-Cells and NK cells. Conflictingly found only in NK cells.

The protein resides in the cytoplasm. Functionally, cytoplasmic adapter regulating receptors of the signaling lymphocytic activation molecule (SLAM) family. In SLAM signaling may cooperate with Sh2d1a/SAP. Plays a role in regulation of effector functions of natural killer (NK) cells by controlling signal transduction through Cd244/2b4. However, conflicting results are reported which may reflect the use of different strain backgrounds. Proposed to act as an inhibitor of Cd244-mediated NK cell function including cytotoxicity and IFN-gamma production, the latter found also by triggering Klra4 and Klrk1 next to Cd244. Seems to positively regulate Cd244- and Cd84-dependent NK cell functions implicating Cd244-mediated phosphorylation of Vav1. The sequence is that of SH2 domain-containing protein 1B2 (Sh2d1b2) from Mus musculus (Mouse).